Reading from the N-terminus, the 282-residue chain is MANQLILLKKDFFTDEQQAVTVADRYPQDVFAEHTHEFCELVMVWRGNGLHVLNERPYRITRGDLFYIRAEDKHSYTSVNDLVLQNIIYCPERLKLNVNWQAMIPGFQGAQWHPHWRLGSMGMNQARQVINQLEHESNGRDPLANEMAELLFGQLVMTLKRHRYATDDLPATSRETLLDKLITALANSLECPFALDAFCQQEQCSERVLRQQFRAQTGMTINQYLRQVRICHAQYLLQHSPLMVSEISMQCGFEDSNYFSVVFTRETGMTPSQWRHLSNQSD.

The HTH araC/xylS-type domain occupies 179-277 (DKLITALANS…GMTPSQWRHL (99 aa)). DNA-binding regions (H-T-H motif) lie at residues 196-217 (DAFC…RAQT) and 244-267 (VSEI…TRET).

In terms of assembly, binds DNA as a dimer.

It is found in the cytoplasm. Its function is as follows. Activates expression of the rhaSR operon in response to L-rhamnose. The chain is HTH-type transcriptional activator RhaR from Salmonella typhi.